The sequence spans 308 residues: tRNA pseudouridine synthase B (308 aa).

Residue Asp33 is the Nucleophile of the active site.

Belongs to the pseudouridine synthase TruB family. Type 1 subfamily.

The enzyme catalyses uridine(55) in tRNA = pseudouridine(55) in tRNA. In terms of biological role, responsible for synthesis of pseudouridine from uracil-55 in the psi GC loop of transfer RNAs. This chain is tRNA pseudouridine synthase B, found in Nitrosomonas europaea (strain ATCC 19718 / CIP 103999 / KCTC 2705 / NBRC 14298).